A 396-amino-acid polypeptide reads, in one-letter code: 1-deoxy-D-xylulose 5-phosphate reductoisomerase (396 aa).

NADPH-binding residues include Thr-10, Gly-11, Ser-12, Ile-13, Gly-36, Lys-37, Asn-38, and Asn-124. Lys-125 is a 1-deoxy-D-xylulose 5-phosphate binding site. Glu-126 contacts NADPH. Mn(2+) is bound at residue Asp-150. Residues Ser-151, Glu-152, Ser-186, and His-209 each contribute to the 1-deoxy-D-xylulose 5-phosphate site. Position 152 (Glu-152) interacts with Mn(2+). Position 215 (Gly-215) interacts with NADPH. Positions 222, 227, 228, and 231 each coordinate 1-deoxy-D-xylulose 5-phosphate. A Mn(2+)-binding site is contributed by Glu-231.

The protein belongs to the DXR family. The cofactor is Mg(2+). Mn(2+) is required as a cofactor.

It catalyses the reaction 2-C-methyl-D-erythritol 4-phosphate + NADP(+) = 1-deoxy-D-xylulose 5-phosphate + NADPH + H(+). The protein operates within isoprenoid biosynthesis; isopentenyl diphosphate biosynthesis via DXP pathway; isopentenyl diphosphate from 1-deoxy-D-xylulose 5-phosphate: step 1/6. Functionally, catalyzes the NADPH-dependent rearrangement and reduction of 1-deoxy-D-xylulose-5-phosphate (DXP) to 2-C-methyl-D-erythritol 4-phosphate (MEP). This is 1-deoxy-D-xylulose 5-phosphate reductoisomerase from Actinobacillus pleuropneumoniae serotype 3 (strain JL03).